A 278-amino-acid chain; its full sequence is Large ribosomal subunit protein uL2 (278 aa).

Disordered regions lie at residues 1-58 (MGIR…GGGH) and 210-278 (GRMR…GKKR). Residues 23 to 33 (EVTRSEPEKSL) are compositionally biased toward basic and acidic residues. The span at 40–49 (SGGRNSTGRI) shows a compositional bias: low complexity. 2 stretches are compositionally biased toward basic residues: residues 210–220 (GRMRWKGKRPS) and 269–278 (VRRRRTGKKR).

This sequence belongs to the universal ribosomal protein uL2 family. In terms of assembly, part of the 50S ribosomal subunit. Forms a bridge to the 30S subunit in the 70S ribosome.

In terms of biological role, one of the primary rRNA binding proteins. Required for association of the 30S and 50S subunits to form the 70S ribosome, for tRNA binding and peptide bond formation. It has been suggested to have peptidyltransferase activity; this is somewhat controversial. Makes several contacts with the 16S rRNA in the 70S ribosome. The chain is Large ribosomal subunit protein uL2 from Beutenbergia cavernae (strain ATCC BAA-8 / DSM 12333 / CCUG 43141 / JCM 11478 / NBRC 16432 / NCIMB 13614 / HKI 0122).